The primary structure comprises 396 residues: Tryptophan synthase beta chain (396 aa).

Position 88 is an N6-(pyridoxal phosphate)lysine (Lys88).

This sequence belongs to the TrpB family. In terms of assembly, tetramer of two alpha and two beta chains. It depends on pyridoxal 5'-phosphate as a cofactor.

It carries out the reaction (1S,2R)-1-C-(indol-3-yl)glycerol 3-phosphate + L-serine = D-glyceraldehyde 3-phosphate + L-tryptophan + H2O. It participates in amino-acid biosynthesis; L-tryptophan biosynthesis; L-tryptophan from chorismate: step 5/5. Its function is as follows. The beta subunit is responsible for the synthesis of L-tryptophan from indole and L-serine. The chain is Tryptophan synthase beta chain from Actinobacillus pleuropneumoniae serotype 3 (strain JL03).